Consider the following 466-residue polypeptide: Ribulose bisphosphate carboxylase (466 aa).

Position 111 (asparagine 111) interacts with substrate. Residue lysine 166 is the Proton acceptor of the active site. Lysine 168 serves as a coordination point for substrate. Mg(2+)-binding residues include lysine 191, aspartate 193, and glutamate 194. Lysine 191 bears the N6-carboxylysine mark. Histidine 287 functions as the Proton acceptor in the catalytic mechanism. The substrate site is built by arginine 288, histidine 321, and serine 368.

Belongs to the RuBisCO large chain family. Type II subfamily. As to quaternary structure, homodimer. It depends on Mg(2+) as a cofactor.

The enzyme catalyses 2 (2R)-3-phosphoglycerate + 2 H(+) = D-ribulose 1,5-bisphosphate + CO2 + H2O. It carries out the reaction D-ribulose 1,5-bisphosphate + O2 = 2-phosphoglycolate + (2R)-3-phosphoglycerate + 2 H(+). RuBisCO catalyzes two reactions: the carboxylation of D-ribulose 1,5-bisphosphate, the primary event in carbon dioxide fixation, as well as the oxidative fragmentation of the pentose substrate. Both reactions occur simultaneously and in competition at the same active site. The protein is Ribulose bisphosphate carboxylase (cbbM) of Rhodospirillum rubrum.